A 519-amino-acid chain; its full sequence is uncharacterized protein (519 aa).

Over residues 477 to 486 (IKRERAHVTQ) the composition is skewed to basic residues. Residues 477-519 (IKRERAHVTQRNKPPPSGGDTAVAEGFEPPDGVSRLSLSRRVH) are disordered.

This is an uncharacterized protein from Mycobacterium tuberculosis (strain ATCC 25618 / H37Rv).